The primary structure comprises 325 residues: Hydroxymethylglutaryl-CoA lyase, mitochondrial (325 aa).

A mitochondrion-targeting transit peptide spans 1–27; it reads MAAMRKAVPRRLVGLASLRAVSTSSMG. Residues 33-300 enclose the Pyruvate carboxyltransferase domain; the sequence is VKIVEVGPRD…HTGVNLQKLL (268 aa). Arginine 41 is a binding site for substrate. Residue aspartate 42 participates in a divalent metal cation binding. Lysine 48 is modified (N6-acetyllysine; alternate). Lysine 48 is subject to N6-succinyllysine; alternate. An N6-acetyllysine modification is found at lysine 111. N6-acetyllysine; alternate is present on residues lysine 137 and lysine 179. 2 positions are modified to N6-succinyllysine; alternate: lysine 137 and lysine 179. Histidine 233 and histidine 235 together coordinate a divalent metal cation. Cysteine 266 is an active-site residue. Asparagine 275 is an a divalent metal cation binding site. Residues 323 to 325 carry the Microbody targeting signal motif; it reads CKL. Position 324 is an N6-acetyllysine (lysine 324).

The protein belongs to the HMG-CoA lyase family. In terms of assembly, homodimer; disulfide-linked. Can also form homotetramers.

Its subcellular location is the mitochondrion matrix. It localises to the peroxisome. The catalysed reaction is (3S)-3-hydroxy-3-methylglutaryl-CoA = acetoacetate + acetyl-CoA. Its pathway is metabolic intermediate metabolism; (S)-3-hydroxy-3-methylglutaryl-CoA degradation; acetoacetate from (S)-3-hydroxy-3-methylglutaryl-CoA: step 1/1. In terms of biological role, mitochondrial 3-hydroxy-3-methylglutaryl-CoA lyase that catalyzes a cation-dependent cleavage of (S)-3-hydroxy-3-methylglutaryl-CoA into acetyl-CoA and acetoacetate, a key step in ketogenesis. Terminal step in leucine catabolism. Ketone bodies (beta-hydroxybutyrate, acetoacetate and acetone) are essential as an alternative source of energy to glucose, as lipid precursors and as regulators of metabolism. The protein is Hydroxymethylglutaryl-CoA lyase, mitochondrial (HMGCL) of Pongo abelii (Sumatran orangutan).